The following is a 338-amino-acid chain: MPYKRITLTHFLLQEQRRLGGSGSFTALMTDIIFACKMISHEVNRGALAGNLGVAGSENVQGEEQKKLDVLANDIFLHMNALGGSYAGMASEELEDVHAVHGAADGKYLLLFDPLDGSSNIDVNISVGSIFSILKLPEGANAGSKDAFLQPGVKQVAAGYALYGSSTMLVLTTGNGVNGFTLDNNVGMFLLTHPNMTIPADTKEFAINASRERFWEPPVKRYIDECRQGKEGPRGKDFNMRWVASMVAEVHRILCRGGVFLYPADTENMKKGGKLRLMYEANPMAFIVEQAGGAATTGRGRMMEVPPTGLHQRVPVILGSKEEVERIGAYHAEYDAKK.

The Mg(2+) site is built by glutamate 92, aspartate 113, leucine 115, and aspartate 116. Substrate-binding positions include 116-119, asparagine 208, and lysine 274; that span reads DGSS. Glutamate 280 is a binding site for Mg(2+).

The protein belongs to the FBPase class 1 family. As to quaternary structure, homotetramer. Mg(2+) serves as cofactor.

The protein resides in the cytoplasm. The enzyme catalyses beta-D-fructose 1,6-bisphosphate + H2O = beta-D-fructose 6-phosphate + phosphate. Its pathway is carbohydrate biosynthesis; gluconeogenesis. In Paramagnetospirillum magneticum (strain ATCC 700264 / AMB-1) (Magnetospirillum magneticum), this protein is Fructose-1,6-bisphosphatase class 1.